Here is a 156-residue protein sequence, read N- to C-terminus: Small ribosomal subunit protein uS7 (156 aa).

It belongs to the universal ribosomal protein uS7 family. Part of the 30S ribosomal subunit. Contacts proteins S9 and S11.

In terms of biological role, one of the primary rRNA binding proteins, it binds directly to 16S rRNA where it nucleates assembly of the head domain of the 30S subunit. Is located at the subunit interface close to the decoding center, probably blocks exit of the E-site tRNA. The chain is Small ribosomal subunit protein uS7 from Bordetella bronchiseptica (strain ATCC BAA-588 / NCTC 13252 / RB50) (Alcaligenes bronchisepticus).